Reading from the N-terminus, the 882-residue chain is Putative HTH-type transcriptional regulator Mb0914c (882 aa).

The 66-residue stretch at 814-879 folds into the HTH luxR-type domain; it reads PARGWGSLTP…QLVDEAARRG (66 aa). Positions 838-857 form a DNA-binding region, H-T-H motif; sequence NKDIAKRLFVSPRTVQTHLT.

The chain is Putative HTH-type transcriptional regulator Mb0914c from Mycobacterium bovis (strain ATCC BAA-935 / AF2122/97).